The sequence spans 262 residues: Apolipoprotein A-Ia (262 aa).

The signal sequence occupies residues 1–18 (MKFVALALTLLLALGSQA). Residues 32 to 63 (YKAAALVYLNQVKDQAEKALDNLDGTDYEQYK) are 3 X approximate tandem repeats. A run of 2 repeats spans residues 64–85 (LQLSESLTKLQEYAQTTSQALT) and 87–107 (YAETISTQLMENTKQLRERVM). The interval 64–262 (LQLSESLTKL…YETIAKAIQA (199 aa)) is 10 X approximate tandem repeats. The 3; half-length repeat unit spans residues 108–118 (TDVEDLRSKLE). A run of 5 repeats spans residues 119–140 (PHRAELYTALQKHIDEYREKLE), 141–162 (PVFQEYSALNRQNAEQLRAKLE), 163–184 (PLMDDIRKAFESNIEETKSKVV), 185–206 (PMVEAVRTKLTERLEDLRTMAA), and 207–228 (PYAEEYKEQLVKAVEEAREKIA). Residues 229 to 239 (PHTQDLQTRME) form a 9; half-length repeat. Copy 10 of the repeat occupies 240–262 (PYMENVRTTFAQMYETIAKAIQA).

Belongs to the apolipoprotein A1/A4/E family. In terms of assembly, homodimer. Interacts with naxe and yjefn3.

The protein resides in the secreted. Its function is as follows. Participates in the reverse transport of cholesterol from tissues to the liver for excretion by promoting cholesterol efflux from tissues and by acting as a cofactor for the lecithin cholesterol acyltransferase (LCAT). The polypeptide is Apolipoprotein A-Ia (Danio rerio (Zebrafish)).